We begin with the raw amino-acid sequence, 174 residues long: 3-hydroxydecanoyl-[acyl-carrier-protein] dehydratase (174 aa).

Histidine 73 is an active-site residue.

Belongs to the thioester dehydratase family. FabA subfamily. In terms of assembly, homodimer.

Its subcellular location is the cytoplasm. It carries out the reaction a (3R)-hydroxyacyl-[ACP] = a (2E)-enoyl-[ACP] + H2O. It catalyses the reaction (3R)-hydroxydecanoyl-[ACP] = (2E)-decenoyl-[ACP] + H2O. The catalysed reaction is (2E)-decenoyl-[ACP] = (3Z)-decenoyl-[ACP]. It functions in the pathway lipid metabolism; fatty acid biosynthesis. Its function is as follows. Necessary for the introduction of cis unsaturation into fatty acids. Catalyzes the dehydration of (3R)-3-hydroxydecanoyl-ACP to E-(2)-decenoyl-ACP and then its isomerization to Z-(3)-decenoyl-ACP. Can catalyze the dehydratase reaction for beta-hydroxyacyl-ACPs with saturated chain lengths up to 16:0, being most active on intermediate chain length. The protein is 3-hydroxydecanoyl-[acyl-carrier-protein] dehydratase of Saccharophagus degradans (strain 2-40 / ATCC 43961 / DSM 17024).